A 209-amino-acid chain; its full sequence is Small ribosomal subunit protein uS4 (209 aa).

The region spanning 98–164 (RRLDNVVYRL…LPIKNAIELN (67 aa)) is the S4 RNA-binding domain.

It belongs to the universal ribosomal protein uS4 family. Part of the 30S ribosomal subunit. Contacts protein S5. The interaction surface between S4 and S5 is involved in control of translational fidelity.

Functionally, one of the primary rRNA binding proteins, it binds directly to 16S rRNA where it nucleates assembly of the body of the 30S subunit. With S5 and S12 plays an important role in translational accuracy. The polypeptide is Small ribosomal subunit protein uS4 (Thermosipho melanesiensis (strain DSM 12029 / CIP 104789 / BI429)).